Here is a 76-residue protein sequence, read N- to C-terminus: Histone acetyltransferase (76 aa).

Physically interacts with histone H3 in infected macrophages.

Its subcellular location is the secreted. The protein resides in the host cytoplasm. It localises to the host nucleus. The enzyme catalyses L-lysyl-[protein] + acetyl-CoA = N(6)-acetyl-L-lysyl-[protein] + CoA + H(+). Its activity is regulated as follows. Is completely inhibited by anacardic acid, an inhibitor of HAT activity. Its function is as follows. Histone acetyltransferase, which by binding to the host chromatin, may manipulate the expression of host genes involved in anti-inflammatory responses to evade clearance and to survive in the intracellular milieu. Acetylates histone H3 at the 'Lys-9' and 'Lys-14' positions. The polypeptide is Histone acetyltransferase (Mycobacterium tuberculosis (strain CDC 1551 / Oshkosh)).